Here is a 111-residue protein sequence, read N- to C-terminus: 2Fe-2S ferredoxin (111 aa).

Residues 2–104 (PKIVILPHQD…DLVVEIPRYT (103 aa)) form the 2Fe-2S ferredoxin-type domain. [2Fe-2S] cluster-binding residues include Cys42, Cys48, Cys51, and Cys87.

The protein belongs to the adrenodoxin/putidaredoxin family. [2Fe-2S] cluster is required as a cofactor.

Its function is as follows. Ferredoxin are iron-sulfur proteins that transfer electrons in a wide variety of metabolic reactions. Although the function of this ferredoxin is unknown it is probable that it has a role as a cellular electron transfer protein. Involved in the in vivo assembly of the Fe-S clusters in a wide variety of iron-sulfur proteins. This chain is 2Fe-2S ferredoxin (fdx), found in Escherichia coli O157:H7.